A 1616-amino-acid polypeptide reads, in one-letter code: Protein P200 (1616 aa).

Disordered stretches follow at residues 1 to 41 (MPKT…DKVE), 878 to 909 (HFQP…QAEF), 931 to 975 (QQLE…LDQN), 1004 to 1083 (DNVE…EPVD), 1100 to 1132 (FDKN…TVGE), and 1159 to 1433 (ISEP…SEEE). The segment at 891–1389 (EAKFDSPVEI…QEAKFDSPVE (499 aa)) is 2 X 26 AA repeats. The segment covering 938–952 (EETVVTPTEVTAFEP) has biased composition (low complexity). Composition is skewed to basic and acidic residues over residues 1012-1029 (QPKE…KELQ) and 1059-1081 (VFEK…KSEP). A run of 2 repeats spans residues 1161–1186 (EPQV…SPVE) and 1205–1236 (EIQP…SPVE). Polar residues-rich tracts occupy residues 1200-1227 (VQTQ…QTPQ) and 1242-1251 (EFSSEPTQQH). The 2 X 32 AA repeats stretch occupies residues 1205 to 1389 (EIQPVESQPE…QEAKFDSPVE (185 aa)). The span at 1256–1270 (ASFDEPNYDFDEPNY) shows a compositional bias: acidic residues. A compositionally biased stretch (polar residues) spans 1276–1285 (SYDSDLQPSE). Residues 1288–1302 (YDVDEPNYDFDEPNY) are compositionally biased toward acidic residues. Positions 1309–1323 (SEPQFEPQVEQQPGE) are enriched in low complexity. Tandem repeats lie at residues 1310–1339 (EPQF…SPVE) and 1358–1389 (EIQP…SPVE). Residues 1353–1380 (VQTQPEIQPVESQPEATFDTVQPEQTPQ) are compositionally biased toward polar residues. Positions 1392 to 1406 (QEPQVSSEPEVVVQP) are enriched in low complexity. The span at 1416–1433 (VLEEPQADEIQPEASEEE) shows a compositional bias: acidic residues.

Could be an accessory structural component in cytadherence. This chain is Protein P200, found in Mycoplasma genitalium (strain ATCC 33530 / DSM 19775 / NCTC 10195 / G37) (Mycoplasmoides genitalium).